The primary structure comprises 250 residues: Ubiquinone/menaquinone biosynthesis C-methyltransferase UbiE (250 aa).

S-adenosyl-L-methionine contacts are provided by residues threonine 73, aspartate 94, 122–123 (NS), and serine 139.

The protein belongs to the class I-like SAM-binding methyltransferase superfamily. MenG/UbiE family.

It catalyses the reaction a 2-demethylmenaquinol + S-adenosyl-L-methionine = a menaquinol + S-adenosyl-L-homocysteine + H(+). The enzyme catalyses a 2-methoxy-6-(all-trans-polyprenyl)benzene-1,4-diol + S-adenosyl-L-methionine = a 5-methoxy-2-methyl-3-(all-trans-polyprenyl)benzene-1,4-diol + S-adenosyl-L-homocysteine + H(+). It functions in the pathway quinol/quinone metabolism; menaquinone biosynthesis; menaquinol from 1,4-dihydroxy-2-naphthoate: step 2/2. The protein operates within cofactor biosynthesis; ubiquinone biosynthesis. In terms of biological role, methyltransferase required for the conversion of demethylmenaquinol (DMKH2) to menaquinol (MKH2) and the conversion of 2-polyprenyl-6-methoxy-1,4-benzoquinol (DDMQH2) to 2-polyprenyl-3-methyl-6-methoxy-1,4-benzoquinol (DMQH2). The chain is Ubiquinone/menaquinone biosynthesis C-methyltransferase UbiE from Wigglesworthia glossinidia brevipalpis.